A 250-amino-acid chain; its full sequence is Hydroxyethylthiazole kinase (250 aa).

Residue Met-39 participates in substrate binding. ATP contacts are provided by Arg-114 and Thr-159. Gly-186 contributes to the substrate binding site.

The protein belongs to the Thz kinase family. Mg(2+) is required as a cofactor.

It catalyses the reaction 5-(2-hydroxyethyl)-4-methylthiazole + ATP = 4-methyl-5-(2-phosphooxyethyl)-thiazole + ADP + H(+). Its pathway is cofactor biosynthesis; thiamine diphosphate biosynthesis; 4-methyl-5-(2-phosphoethyl)-thiazole from 5-(2-hydroxyethyl)-4-methylthiazole: step 1/1. Catalyzes the phosphorylation of the hydroxyl group of 4-methyl-5-beta-hydroxyethylthiazole (THZ). This Lactococcus lactis subsp. cremoris (strain MG1363) protein is Hydroxyethylthiazole kinase.